The sequence spans 265 residues: R-spondin-1 (265 aa).

A signal peptide spans 1-20 (MRLGLCVVALVLSWTHIAVG). 2 FU repeats span residues 34 to 85 (AEGS…GYFD) and 91 to 135 (MNKC…GSTA). Disulfide bonds link cysteine 40/cysteine 47, cysteine 44/cysteine 53, cysteine 56/cysteine 75, cysteine 79/cysteine 94, cysteine 97/cysteine 105, cysteine 102/cysteine 111, cysteine 114/cysteine 125, cysteine 129/cysteine 142, cysteine 148/cysteine 190, cysteine 159/cysteine 166, and cysteine 199/cysteine 206. Residue asparagine 137 is glycosylated (N-linked (GlcNAc...) asparagine). A TSP type-1 domain is found at 147–207 (QCEMSEWSPW…KCTVRRTPCP (61 aa)). The C-linked (Man) tryptophan glycan is linked to tryptophan 153. Tryptophan 156 carries a C-linked (Man) tryptophan; by DPY19L3 glycan. Disordered stretches follow at residues 173–192 (EERT…TCSD) and 201–265 (VRRT…TWAQ). Residues 245 to 257 (QQQPQPGTTGPLT) are compositionally biased toward low complexity.

It belongs to the R-spondin family. Interacts with ZNRF3; promoting indirect interaction between ZNRF3 and LGR4 and membrane clearance of ZNRF3. Identified in a complex composed of RNF43, LGR5 and RSPO1. Interacts with the extracellular domain of FZD8 and LRP6. It however does not form a ternary complex with FZD8 and LRP6. Interacts with WNT1. Binds heparin. Interacts with LGR4, LGR5 and LGR6. Interacts (via FU repeats) with KREM1. Post-translationally, C-, and N-glycosylated. N-glycosylation at Asn-137, negatively influences its secretion and enhancing effect on Wnt/beta-catenin signaling. C-mannosylation at Trp-156 by DPY19L3 is required for its secretion an regulates the enhancing activity of Wnt signaling. In terms of tissue distribution, expressed in the dorsal part of the neural tube on 10 and 12 dpc, especially in the boundary region between roof plate and neuroepithelium. This expression is enhanced in the rostral part. Also expressed in other tissues such as truncal region neighboring forelimbs and mesenchymal tissues around the nasal cavity.

Its subcellular location is the secreted. It is found in the nucleus. Activator of the canonical Wnt signaling pathway by acting as a ligand for LGR4-6 receptors. Upon binding to LGR4-6 (LGR4, LGR5 or LGR6), LGR4-6 associate with phosphorylated LRP6 and frizzled receptors that are activated by extracellular Wnt receptors, triggering the canonical Wnt signaling pathway to increase expression of target genes. Also regulates the canonical Wnt/beta-catenin-dependent pathway and non-canonical Wnt signaling by acting as an inhibitor of ZNRF3, an important regulator of the Wnt signaling pathway. Acts as a ligand for frizzled FZD8 and LRP6. May negatively regulate the TGF-beta pathway. Has a essential roles in ovary determination. Regulates Wnt signaling by antagonizing DKK1/KREM1-mediated internalization of LRP6 through an interaction with KREM1. This Mus musculus (Mouse) protein is R-spondin-1 (Rspo1).